The chain runs to 319 residues: Non-homologous end joining protein Ku (319 aa).

The 179-residue stretch at 10–188 folds into the Ku domain; the sequence is ISFGLVTVPI…PQGIELSEDE (179 aa). The segment at 252 to 319 is disordered; the sequence is QSVAKAKASR…TTPKKPRRSA (68 aa). Basic and acidic residues predominate over residues 260–274; sequence SRGESGEADVHELPR. Basic residues predominate over residues 305–319; it reads TAAKKTTPKKPRRSA.

The protein belongs to the prokaryotic Ku family. Homodimer. Interacts with LigD.

Its function is as follows. With LigD forms a non-homologous end joining (NHEJ) DNA repair enzyme, which repairs dsDNA breaks with reduced fidelity. Binds linear dsDNA with 5'- and 3'- overhangs but not closed circular dsDNA nor ssDNA. Recruits and stimulates the ligase activity of LigD. In Streptomyces avermitilis (strain ATCC 31267 / DSM 46492 / JCM 5070 / NBRC 14893 / NCIMB 12804 / NRRL 8165 / MA-4680), this protein is Non-homologous end joining protein Ku.